The chain runs to 209 residues: Glutathione S-transferase 2 (209 aa).

A GST N-terminal domain is found at 1–81 (MLDFYYLPGS…YLCDQYGDED (81 aa)). Glutathione is bound by residues S10, 51–53 (RTI), and 65–67 (ESR). One can recognise a GST C-terminal domain in the interval 88 to 209 (DTIQRAIVNQ…SGAKEFLTYK (122 aa)).

It belongs to the GST superfamily. Theta family. As to quaternary structure, homodimer.

It carries out the reaction RX + glutathione = an S-substituted glutathione + a halide anion + H(+). Functionally, conjugation of reduced glutathione to a wide number of exogenous and endogenous hydrophobic electrophiles. The protein is Glutathione S-transferase 2 (GstD2) of Anopheles gambiae (African malaria mosquito).